Here is a 101-residue protein sequence, read N- to C-terminus: Small ribosomal subunit protein uS14 (101 aa).

Belongs to the universal ribosomal protein uS14 family. Part of the 30S ribosomal subunit. Contacts proteins S3 and S10.

Functionally, binds 16S rRNA, required for the assembly of 30S particles and may also be responsible for determining the conformation of the 16S rRNA at the A site. This chain is Small ribosomal subunit protein uS14, found in Citrobacter koseri (strain ATCC BAA-895 / CDC 4225-83 / SGSC4696).